The chain runs to 139 residues: Arsenate reductase (139 aa).

Catalysis depends on nucleophile residues Cys-10, Cys-82, and Cys-89. 2 disulfides stabilise this stretch: Cys-10/Cys-82 and Cys-82/Cys-89.

It belongs to the low molecular weight phosphotyrosine protein phosphatase family. Thioredoxin-coupled ArsC subfamily.

The protein localises to the cytoplasm. The enzyme catalyses arsenate + [thioredoxin]-dithiol + H(+) = arsenite + [thioredoxin]-disulfide + H2O. Catalyzes the reduction of arsenate [As(V)] to arsenite [As(III)]. This is Arsenate reductase from Shouchella clausii (strain KSM-K16) (Alkalihalobacillus clausii).